The chain runs to 117 residues: uncharacterized protein (117 aa).

Helical transmembrane passes span 32 to 52, 56 to 76, and 87 to 107; these read VSSS…VTVV, VGVA…VTLL, and LSWC…SFFF.

It is found in the membrane. This is an uncharacterized protein from Saccharomyces cerevisiae (strain ATCC 204508 / S288c) (Baker's yeast).